Reading from the N-terminus, the 283-residue chain is NAD kinase (283 aa).

Aspartate 73 serves as the catalytic Proton acceptor. NAD(+) contacts are provided by residues 73–74 (DG), 146–147 (NE), histidine 157, histidine 176, aspartate 178, 189–194 (TAYNLS), and alanine 213.

Belongs to the NAD kinase family. A divalent metal cation serves as cofactor.

Its subcellular location is the cytoplasm. It catalyses the reaction NAD(+) + ATP = ADP + NADP(+) + H(+). Functionally, involved in the regulation of the intracellular balance of NAD and NADP, and is a key enzyme in the biosynthesis of NADP. Catalyzes specifically the phosphorylation on 2'-hydroxyl of the adenosine moiety of NAD to yield NADP. The sequence is that of NAD kinase from Haloarcula marismortui (strain ATCC 43049 / DSM 3752 / JCM 8966 / VKM B-1809) (Halobacterium marismortui).